Consider the following 416-residue polypeptide: tRNA(Met) cytidine acetate ligase (416 aa).

ATP-binding positions include Val-7 to His-20, Gly-101, Asn-163, and Arg-188.

The protein belongs to the TmcAL family.

The protein localises to the cytoplasm. It catalyses the reaction cytidine(34) in elongator tRNA(Met) + acetate + ATP = N(4)-acetylcytidine(34) in elongator tRNA(Met) + AMP + diphosphate. In terms of biological role, catalyzes the formation of N(4)-acetylcytidine (ac(4)C) at the wobble position of elongator tRNA(Met), using acetate and ATP as substrates. First activates an acetate ion to form acetyladenylate (Ac-AMP) and then transfers the acetyl group to tRNA to form ac(4)C34. This is tRNA(Met) cytidine acetate ligase from Bacillus licheniformis (strain ATCC 14580 / DSM 13 / JCM 2505 / CCUG 7422 / NBRC 12200 / NCIMB 9375 / NCTC 10341 / NRRL NRS-1264 / Gibson 46).